Consider the following 192-residue polypeptide: uncharacterized protein (192 aa).

The Nudix hydrolase domain occupies 29–160 (QRQAAVLIPV…PLDVYRRGNS (132 aa)). The Nudix box signature appears at 67-89 (GAVDSTDASLIAAALREAQEEVA). Residues Glu83 and Glu87 each coordinate Mg(2+).

This sequence belongs to the Nudix hydrolase family. PCD1 subfamily. Mn(2+) is required as a cofactor. The cofactor is Mg(2+).

Probably mediates the hydrolysis of some nucleoside diphosphate derivatives. This is an uncharacterized protein from Salmonella choleraesuis (strain SC-B67).